The primary structure comprises 147 residues: Hemoglobin subunit epsilon (147 aa).

The 145-residue stretch at 3 to 147 (HFTAEEKAAI…VAIALGHKYH (145 aa)) folds into the Globin domain. Phosphoserine is present on residues Ser14 and Ser51. His64 and His93 together coordinate heme b.

The protein belongs to the globin family. In terms of assembly, heterotetramer of two alpha chains and two epsilon chains in early embryonic hemoglobin Gower-2; two zeta chains and two epsilon chains in early embryonic hemoglobin Gower-1. Red blood cells.

Functionally, the epsilon chain is a beta-type chain of early mammalian embryonic hemoglobin. The protein is Hemoglobin subunit epsilon (HBE1) of Leontopithecus rosalia (Golden lion tamarin).